We begin with the raw amino-acid sequence, 88 residues long: Small ribosomal subunit protein uS17 (88 aa).

This sequence belongs to the universal ribosomal protein uS17 family. Part of the 30S ribosomal subunit.

In terms of biological role, one of the primary rRNA binding proteins, it binds specifically to the 5'-end of 16S ribosomal RNA. This Mycoplasmopsis pulmonis (strain UAB CTIP) (Mycoplasma pulmonis) protein is Small ribosomal subunit protein uS17.